The primary structure comprises 222 residues: Methionine import system permease protein MetP (222 aa).

One can recognise an ABC transmembrane type-1 domain in the interval 18–212; that stretch reads TYETLYMTLI…IIVFIIQIIG (195 aa). The next 5 helical transmembrane spans lie at 25–45, 73–93, 97–117, 152–172, and 195–215; these read TLIS…LLFL, FLIL…TILG, ALPA…EIAL, ISGI…AGAI, and FVAT…GDLI.

Belongs to the binding-protein-dependent transport system permease family. CysTW subfamily. As to quaternary structure, the complex is composed of two ATP-binding proteins (MetN), two transmembrane proteins (MetP) and a solute-binding protein (MetQ).

It is found in the cell membrane. Its function is as follows. Part of the ABC transporter complex MetNPQ involved in methionine import. Responsible for the translocation of the substrate across the membrane. It has also been shown to be involved in methionine sulfoxide transport. This Bacillus subtilis (strain 168) protein is Methionine import system permease protein MetP (metP).